Consider the following 347-residue polypeptide: Large ribosomal subunit protein uL10 (347 aa).

Residues 312–347 (AAAPAEEEVKKEEEPEEEEEDHAEEDGMAGLGALFG) form a disordered region. Residues 325 to 338 (EPEEEEEDHAEEDG) are compositionally biased toward acidic residues.

Belongs to the universal ribosomal protein uL10 family. Part of the 50S ribosomal subunit. Forms part of the ribosomal stalk which helps the ribosome interact with GTP-bound translation factors. Forms a heptameric L10(L12)2(L12)2(L12)2 complex, where L10 forms an elongated spine to which the L12 dimers bind in a sequential fashion.

Functionally, forms part of the ribosomal stalk, playing a central role in the interaction of the ribosome with GTP-bound translation factors. The protein is Large ribosomal subunit protein uL10 of Methanosarcina acetivorans (strain ATCC 35395 / DSM 2834 / JCM 12185 / C2A).